The chain runs to 112 residues: Inner membrane assembly complex subunit 17 (112 aa).

A mitochondrion-targeting transit peptide spans 1–24 (MLRKLPINFAKWTVKKVPVQQKRF). Residues 25 to 44 (NSQQKEISPHIMFYKNYARP) are Mitochondrial matrix-facing. Residues 45–62 (LGKVTLFALATYYGLEIV) traverse the membrane as a helical segment. The Mitochondrial intermembrane segment spans residues 63 to 112 (WWKLDASEQEAIKNSKLLICESSFSLLTFRRITEFRECEIKTRDLYDPEI).

It belongs to the INA17 family. Component of the inner membrane assembly (INA) complex. Interacts with a subset of F(1)F(0)-ATP synthase subunits of the F(1)-domain and the peripheral stalk.

It is found in the mitochondrion inner membrane. In terms of biological role, component of the INA complex (INAC) that promotes the biogenesis of mitochondrial F(1)F(0)-ATP synthase. INAC facilitates the assembly of the peripheral stalk and promotes the assembly of the catalytic F(1)-domain with the membrane-embedded F(0)-domain. The sequence is that of Inner membrane assembly complex subunit 17 from Schizosaccharomyces pombe (strain 972 / ATCC 24843) (Fission yeast).